The following is a 93-amino-acid chain: Large ribosomal subunit protein bL31B (93 aa).

The protein belongs to the bacterial ribosomal protein bL31 family. Type B subfamily. As to quaternary structure, part of the 50S ribosomal subunit.

This is Large ribosomal subunit protein bL31B from Pseudomonas syringae pv. tomato (strain ATCC BAA-871 / DC3000).